Here is a 530-residue protein sequence, read N- to C-terminus: UDP-glucuronosyltransferase 2B17 (530 aa).

Residues 1–23 (MPGKWISALLLLQISCCFQSGNC) form the signal peptide. The chain crosses the membrane as a helical span at residues 494-510 (VIGFLLTCSAVIAVLTV).

The protein belongs to the UDP-glycosyltransferase family.

Its subcellular location is the endoplasmic reticulum membrane. The enzyme catalyses glucuronate acceptor + UDP-alpha-D-glucuronate = acceptor beta-D-glucuronoside + UDP + H(+). It carries out the reaction 17alpha-estradiol + UDP-alpha-D-glucuronate = 17alpha-estradiol 3-O-(beta-D-glucuronate) + UDP + H(+). The catalysed reaction is 17alpha-estradiol + UDP-alpha-D-glucuronate = 17alpha-estradiol 17-O-(beta-D-glucuronate) + UDP + H(+). It catalyses the reaction 17beta-estradiol + UDP-alpha-D-glucuronate = 17beta-estradiol 17-O-(beta-D-glucuronate) + UDP + H(+). The enzyme catalyses 17beta-hydroxy-5alpha-androstan-3-one + UDP-alpha-D-glucuronate = 5alpha-dihydrotestosterone 17-O-(beta-D-glucuronate) + UDP + H(+). It carries out the reaction testosterone + UDP-alpha-D-glucuronate = testosterone 17-O-(beta-D-glucuronate) + UDP + H(+). UDP-glucuronosyltransferase (UGT) that catalyzes phase II biotransformation reactions in which lipophilic substrates are conjugated with glucuronic acid to increase the metabolite's water solubility, thereby facilitating excretion into either the urine or bile. Catalyzes the glucuronidation of endogenous steroid hormones such as androgens (epitestosterone, androsterone) and estrogens (estradiol, epiestradiol). This is UDP-glucuronosyltransferase 2B17 from Rattus norvegicus (Rat).